The chain runs to 485 residues: Cyclic GMP-AMP synthase-like receptor (485 aa).

ATP is bound by residues S70 and 82–84 (EYD). Mg(2+) contacts are provided by E82, D84, and D204. Residues D204 and 247–254 (RLSFYEQE) each bind GTP. ATP contacts are provided by K271 and K274. Mn(2+)-binding residues include I298 and D304.

The protein belongs to the mab-21 family. Requires Mg(2+) as cofactor. Mn(2+) serves as cofactor.

It carries out the reaction GTP + ATP = 2',3'-cGAMP + 2 diphosphate. It catalyses the reaction GTP + ATP = pppGp(2'-5')A + diphosphate. The enzyme catalyses pppGp(2'-5')A = 2',3'-cGAMP + diphosphate. Functionally, nucleotidyltransferase that catalyzes the formation of cyclic GMP-AMP (2',3'-cGAMP) from ATP and GTP and plays a key role in innate immunity. Directly binds some unknown ligand, activating the nucleotidyltransferase activity, leading to synthesis of 2',3'-cGAMP, a second messenger that binds to and activates Sting, thereby triggering the immune response via activation of the NF-kappa-B transcription factor. The polypeptide is Cyclic GMP-AMP synthase-like receptor (Trichogramma pretiosum (Parasitoid wasp)).